Here is a 525-residue protein sequence, read N- to C-terminus: Protein disulfide-isomerase A2 (525 aa).

Residues 1–21 (MSCQLLPVLLLLLLRASCPWG) form the signal peptide. One can recognise a Thioredoxin 1 domain in the interval 27-152 (RSPSEEPPEE…IAEWLRRRVG (126 aa)). Catalysis depends on nucleophile residues cysteine 71 and cysteine 74. Cysteines 71 and 74 form a disulfide. N-linked (GlcNAc...) asparagine glycosylation is found at asparagine 127 and asparagine 284. Positions 367 to 496 (VLNGQVKPYL…FSKFLDNGGV (130 aa)) constitute a Thioredoxin 2 domain. Catalysis depends on nucleophile residues cysteine 418 and cysteine 421. Cysteine 418 and cysteine 421 are joined by a disulfide. The segment at 498–525 (PTEEPLEEPAAPFPEPPANSTMGSKEEL) is disordered. A glycan (N-linked (GlcNAc...) asparagine) is linked at asparagine 516. A compositionally biased stretch (polar residues) spans 516 to 525 (NSTMGSKEEL). A Prevents secretion from ER motif is present at residues 522-525 (KEEL).

This sequence belongs to the protein disulfide isomerase family. Monomer; predominantly as monomer under reducing conditions. Homodimer; disulfide-linked. Part of a large chaperone multiprotein complex comprising DNAJB11, HSP90B1, HSPA5, HYOU, PDIA2, PDIA4, PDIA6, PPIB, SDF2L1, UGGT1 and very small amounts of ERP29, but not, or at very low levels, CALR nor CANX. In terms of processing, the disulfide-linked homodimer exhibits an enhanced chaperone activity. Post-translationally, glycosylated.

It localises to the endoplasmic reticulum lumen. The catalysed reaction is Catalyzes the rearrangement of -S-S- bonds in proteins.. Functionally, acts as an intracellular estrogen-binding protein. May be involved in modulating cellular levels and biological functions of estrogens in the pancreas. May act as a chaperone that inhibits aggregation of misfolded proteins. This is Protein disulfide-isomerase A2 (PDIA2) from Pongo abelii (Sumatran orangutan).